Here is a 551-residue protein sequence, read N- to C-terminus: Enhancer of mRNA-decapping protein 3 (551 aa).

Residues 1-63 (MSQFVGFGVQ…LKDLKVLTVA (63 aa)) enclose the Sm domain. Residues 64–92 (SQSGKRKQQRQQQQQNDYNQNRGEHIDWQ) are disordered. The 37-residue stretch at 93 to 129 (DDDVSKIKQQEDFDFQRNLGMFNKKDVFAQLKQNDDI) folds into the DFDF domain. 2 positions are modified to phosphoserine: Ser257 and Ser261. One can recognise a YjeF N-terminal domain in the interval 288-527 (VQLLEMESIT…DIGIPQGAYS (240 aa)).

Belongs to the EDC3 family. Homodimer. Interacts with DCP2.

The protein resides in the cytoplasm. It is found in the P-body. Stimulates decapping of both stable and unstable mRNA during mRNA decay. Does not affect nonsense-mediated mRNA decay. Required for normal P-body assembly. The protein is Enhancer of mRNA-decapping protein 3 (EDC3) of Saccharomyces cerevisiae (strain ATCC 204508 / S288c) (Baker's yeast).